The sequence spans 1511 residues: ATP-dependent permease PDR12 (1511 aa).

The segment covering 1 to 21 has biased composition (basic and acidic residues); that stretch reads MSSTDEHIEKDISSRSNHDDD. The tract at residues 1–37 is disordered; sequence MSSTDEHIEKDISSRSNHDDDYANSVQSYAASEGQVD. Ser2 bears the N-acetylserine mark. Residues 2–508 are Cytoplasmic-facing; sequence SSTDEHIEKD…RGFQRVKGDS (507 aa). Residues Ser32, Ser52, and Ser56 each carry the phosphoserine modification. In terms of domain architecture, ABC transporter 1 spans 144–397; it reads IPAHLISKFT…FQRMGWVKPN (254 aa). A Glycyl lysine isopeptide (Lys-Gly) (interchain with G-Cter in ubiquitin) cross-link involves residue Lys426. The chain crosses the membrane as a helical span at residues 509 to 529; the sequence is TYTKVYLSSFLIKALIIGSMF. The Extracellular segment spans residues 530–548; that stretch reads HKIDDKSQSTTAGAYSRGG. The helical transmembrane segment at 549–569 threads the bilayer; the sequence is MLFYVLLFASVTSLAEIGNSF. Topologically, residues 570-597 are cytoplasmic; it reads SSRPVIVKHKSYSMYHLSAESLQEIITE. A helical transmembrane segment spans residues 598–618; it reads FPTKFVAIVILCLITYWIPFM. Topologically, residues 619 to 622 are extracellular; it reads KYEA. Residues 623–643 traverse the membrane as a helical segment; it reads GAFFQYILYLLTVQQCTSFIF. Residues 644 to 657 lie on the Cytoplasmic side of the membrane; that stretch reads KFVATMSKSGVDAH. A helical transmembrane segment spans residues 658 to 678; sequence AVGGLWVLMLCVYAGFVLPIG. At 679-765 the chain is on the extracellular side; it reads EMHHWIRWLH…FAYKHAWRNW (87 aa). A helical transmembrane segment spans residues 766–786; sequence GVNIVWTFGYIVFNVILSEYL. The Cytoplasmic segment spans residues 787–1182; sequence KPVEGGGDLL…WRSPVYIRAK (396 aa). In terms of domain architecture, ABC transporter 2 spans 836–1084; that stretch reads IAEKDVFTWN…TLLKYFERQS (249 aa). Residues 878–885 and 972–979 contribute to the ATP site; these read GESGAGKT and AEALVGKT. The helical transmembrane segment at 1183 to 1203 threads the bilayer; sequence FFECVACALFVGLSYVGVNHS. Val1204 is a topological domain (extracellular). Residues 1205–1225 traverse the membrane as a helical segment; it reads GGAIEAFSSIFMLLLIALAMI. The Cytoplasmic portion of the chain corresponds to 1226-1254; sequence NQLHVFAYDSRELYEVREAASNTFHWSVL. The helical transmembrane segment at 1255-1275 threads the bilayer; the sequence is LLCHAAVENFWSTLCQFMCFI. Over 1276-1291 the chain is Extracellular; that stretch reads CYYWPAQFSGRASHAG. Residues 1292 to 1312 traverse the membrane as a helical segment; the sequence is FFFFFYVLIFPLYFVTYGLWI. The Cytoplasmic segment spans residues 1313-1318; that stretch reads LYMSPD. Residues 1319 to 1339 traverse the membrane as a helical segment; it reads VPSASMINSNLFAAMLLFCGI. The Extracellular segment spans residues 1340-1444; that stretch reads LQPREKMPAF…NVKWDHRWRN (105 aa). Asn1405 is a glycosylation site (N-linked (GlcNAc...) asparagine). The helical transmembrane segment at 1445–1465 threads the bilayer; it reads FGFMWAYICFNIAAMLICYYV. Topologically, residues 1466-1511 are cytoplasmic; that stretch reads VRVKVWSLKSVLNFKKWFNGPRKERHEKDTNIFQTVPGDENKITKK.

This sequence belongs to the ABC transporter superfamily. ABCG family. PDR (TC 3.A.1.205) subfamily.

Its subcellular location is the cell membrane. Functionally, plasma membrane transporter which mediates resistance to water-soluble, monocarboxylic acids with chain lengths of from C1 to C7 by active extrusion of the preservative anions from the cytosol. Also involved in the export of aromatic and branched-chain organic acids produced in amino acid catabolism. In Saccharomyces cerevisiae (strain ATCC 204508 / S288c) (Baker's yeast), this protein is ATP-dependent permease PDR12 (PDR12).